The sequence spans 308 residues: Homeobox-leucine zipper protein HOX2 (308 aa).

Disordered stretches follow at residues 15-36 (QGSL…SSPW) and 71-117 (QGRA…RKKL). Positions 74-88 (ASTSPDSAAALSSAS) are enriched in low complexity. A DNA-binding region (homeobox) is located at residues 112–171 (GGRKKLRLSKDQAAVLEECFKTHSTLNPKQKVALANRLGLRPRQVEVWFQNRRARTKLKQ). Positions 170–214 (KQTEVDCEYLKRWCERLADENKRLEKELADLRALKAAPSPASASA) are leucine-zipper.

The protein belongs to the HD-ZIP homeobox family. Class II subfamily. As to quaternary structure, homodimer. May form a heterodimer with HOX1, HOX3 or HOX7. Expressed in seedlings, roots, leaves, nodes, internodes, flowers and embryo.

Its subcellular location is the nucleus. Functionally, probable transcription factor that binds to the DNA sequence 5'-CAAT[GC]ATTG-3'. The protein is Homeobox-leucine zipper protein HOX2 (HOX2) of Oryza sativa subsp. indica (Rice).